The primary structure comprises 838 residues: Major vault protein (838 aa).

MVP repeat units follow at residues 13–52 (VHILDNNTNVTRCMVGPLVYTRKENERCLFNPKPCIVVPP), 53–114 (RFYC…FKLK), 118–170 (VNTG…HIIS), 171–223 (PNTA…ITLT), 224–278 (DTEA…IVLN), 280–328 (KEYC…NVVS), 329–380 (KDQA…IALD), and 381–433 (KNEG…CMSE).

The vault ribonucleoprotein particle is a huge (400 A x 670 A) cage structure of 12.9 MDa. It consists of a dimer of half-vaults, with each half-vault comprising 39 identical major vault protein (MVP) chains, PARP4 and one or more vault RNAs (vRNAs).

The protein localises to the cytoplasm. It localises to the nucleus. Its function is as follows. Required for normal vault structure. Vaults are multi-subunit structures that may act as scaffolds for proteins involved in signal transduction. Vaults may also play a role in nucleo-cytoplasmic transport. This chain is Major vault protein, found in Trypanosoma cruzi (strain CL Brener).